The primary structure comprises 202 residues: Putative transmembrane protein ORF202 (202 aa).

5 consecutive transmembrane segments (helical) span residues alanine 13–isoleucine 33, valine 40–glycine 60, tyrosine 87–phenylalanine 107, tyrosine 156–serine 176, and leucine 177–alanine 197.

It is found in the host membrane. This chain is Putative transmembrane protein ORF202, found in Acidianus filamentous virus 2 (isolate Italy/Pozzuoli) (AFV-2).